Reading from the N-terminus, the 140-residue chain is Tumor protein D55 (140 aa).

The disordered stretch occupies residues 1–28; the sequence is MPHARTETSVGTYESHSTSELEDLTEPE. Residues 7 to 18 show a composition bias toward polar residues; sequence ETSVGTYESHST. Residues 28–57 adopt a coiled-coil conformation; it reads EQRELKTKLTKLEAEIVTLRHVLAAKERRC.

Belongs to the TPD52 family. Interacts with TPD52L2. In terms of tissue distribution, specifically expressed in testis. Expressed at 5.6-fold higher levels in adult testis than in fetal testis.

This chain is Tumor protein D55 (TPD52L3), found in Homo sapiens (Human).